Reading from the N-terminus, the 299-residue chain is MTLYDVPAPAKLNLFLHVVGRRADGYHLLQTAFRFIDLADTLHFEARADGAIGRAYELPGVAESDDLVVRAARSLQRATGTRQGAQIGLHKRIPQGGGLGGGSSDAATTLIALNRLWGTGLSRSQLMQLALPLGADVPVFVFGQSAFAQGVGEDLTAVALPPAAYLVVQPDAGVPTAAIFSDPDLTRDCASVTIADFLALPTFCFGRNDLEPVVLRRYPEVSGAVRWLFEHGLRVRMSGSGACLFAEFPTLPEAVLAQEEITATMRVAGKTTSHTHPGFRLVQASTGLTEHPLRNWIAS.

Residue K11 is part of the active site. Position 94-104 (P94–S104) interacts with ATP. D136 is a catalytic residue.

This sequence belongs to the GHMP kinase family. IspE subfamily.

The enzyme catalyses 4-CDP-2-C-methyl-D-erythritol + ATP = 4-CDP-2-C-methyl-D-erythritol 2-phosphate + ADP + H(+). Its pathway is isoprenoid biosynthesis; isopentenyl diphosphate biosynthesis via DXP pathway; isopentenyl diphosphate from 1-deoxy-D-xylulose 5-phosphate: step 3/6. Its function is as follows. Catalyzes the phosphorylation of the position 2 hydroxy group of 4-diphosphocytidyl-2C-methyl-D-erythritol. The protein is 4-diphosphocytidyl-2-C-methyl-D-erythritol kinase of Bordetella bronchiseptica (strain ATCC BAA-588 / NCTC 13252 / RB50) (Alcaligenes bronchisepticus).